A 119-amino-acid chain; its full sequence is Toxin ICK-8 (119 aa).

Positions 1 to 19 are cleaved as a signal peptide; it reads MMKLYSLVIIATLAAAAFA. Disulfide bonds link C59–C74, C67–C80, C71–C116, and C73–C87.

The protein belongs to the neurotoxin 25 family. ICK-8 subfamily. Expressed by the venom gland.

It localises to the secreted. In terms of biological role, ion channel inhibitor. The protein is Toxin ICK-8 of Trittame loki (Brush-footed trapdoor spider).